A 347-amino-acid chain; its full sequence is Histone deacetylase 11 (347 aa).

Residues 14-326 form a histone deacetylase region; sequence TRWPIVYSPR…LNLFGLGLIG (313 aa). His-143 is an active-site residue.

It belongs to the histone deacetylase family. Interacts with HDAC6. In terms of tissue distribution, weakly expressed in most tissues. Strongly expressed in brain, heart, skeletal muscle, kidney and testis.

It localises to the nucleus. It carries out the reaction N(6)-acetyl-L-lysyl-[histone] + H2O = L-lysyl-[histone] + acetate. Responsible for the deacetylation of lysine residues on the N-terminal part of the core histones (H2A, H2B, H3 and H4). Histone deacetylation gives a tag for epigenetic repression and plays an important role in transcriptional regulation, cell cycle progression and developmental events. Histone deacetylases act via the formation of large multiprotein complexes. In Homo sapiens (Human), this protein is Histone deacetylase 11 (HDAC11).